The following is a 189-amino-acid chain: Movement protein (189 aa).

Belongs to the tombusvirus/aureusvirus movement protein p22 family.

It localises to the host membrane. In terms of biological role, transports viral genome to neighboring plant cells directly through plasmosdesmata, without any budding. The movement protein allows efficient cell to cell propagation, by bypassing the host cell wall barrier. In Cymbidium ringspot virus (CymRSV), this protein is Movement protein.